Consider the following 399-residue polypeptide: S-adenosylmethionine synthase (399 aa).

An ATP-binding site is contributed by H17. Position 19 (D19) interacts with Mg(2+). A K(+)-binding site is contributed by E45. E58 and Q101 together coordinate L-methionine. Positions 101-111 (QSADIAMGVDQ) are flexible loop. Residues 177 to 179 (DGK), 244 to 245 (RF), D253, 259 to 260 (RK), A276, and K280 each bind ATP. D253 serves as a coordination point for L-methionine. K284 contacts L-methionine.

The protein belongs to the AdoMet synthase family. Homotetramer; dimer of dimers. It depends on Mg(2+) as a cofactor. The cofactor is K(+).

It is found in the cytoplasm. It carries out the reaction L-methionine + ATP + H2O = S-adenosyl-L-methionine + phosphate + diphosphate. Its pathway is amino-acid biosynthesis; S-adenosyl-L-methionine biosynthesis; S-adenosyl-L-methionine from L-methionine: step 1/1. Functionally, catalyzes the formation of S-adenosylmethionine (AdoMet) from methionine and ATP. The overall synthetic reaction is composed of two sequential steps, AdoMet formation and the subsequent tripolyphosphate hydrolysis which occurs prior to release of AdoMet from the enzyme. The chain is S-adenosylmethionine synthase from Bacillus anthracis (strain A0248).